The following is a 616-amino-acid chain: Chaperone protein HscA (616 aa).

This sequence belongs to the heat shock protein 70 family.

Chaperone involved in the maturation of iron-sulfur cluster-containing proteins. Has a low intrinsic ATPase activity which is markedly stimulated by HscB. Involved in the maturation of IscU. This is Chaperone protein HscA from Escherichia coli O6:H1 (strain CFT073 / ATCC 700928 / UPEC).